The sequence spans 425 residues: Trigger factor (425 aa).

The region spanning 158–231 (GDLVRVNMEV…VEEVYKRTLP (74 aa)) is the PPIase FKBP-type domain.

This sequence belongs to the FKBP-type PPIase family. Tig subfamily.

It localises to the cytoplasm. It carries out the reaction [protein]-peptidylproline (omega=180) = [protein]-peptidylproline (omega=0). Involved in protein export. Acts as a chaperone by maintaining the newly synthesized protein in an open conformation. Functions as a peptidyl-prolyl cis-trans isomerase. The polypeptide is Trigger factor (tig) (Thermotoga maritima (strain ATCC 43589 / DSM 3109 / JCM 10099 / NBRC 100826 / MSB8)).